A 282-amino-acid chain; its full sequence is 2,3,4,5-tetrahydropyridine-2,6-dicarboxylate N-succinyltransferase (282 aa).

Substrate contacts are provided by R109 and D146.

This sequence belongs to the transferase hexapeptide repeat family. In terms of assembly, homotrimer.

The protein resides in the cytoplasm. It carries out the reaction (S)-2,3,4,5-tetrahydrodipicolinate + succinyl-CoA + H2O = (S)-2-succinylamino-6-oxoheptanedioate + CoA. The protein operates within amino-acid biosynthesis; L-lysine biosynthesis via DAP pathway; LL-2,6-diaminopimelate from (S)-tetrahydrodipicolinate (succinylase route): step 1/3. The polypeptide is 2,3,4,5-tetrahydropyridine-2,6-dicarboxylate N-succinyltransferase (Bartonella henselae (strain ATCC 49882 / DSM 28221 / CCUG 30454 / Houston 1) (Rochalimaea henselae)).